We begin with the raw amino-acid sequence, 205 residues long: Recombination protein RecR (205 aa).

The C4-type zinc finger occupies 58 to 75 (CSVCQNVTDRDADPCYIC). Positions 83-182 (SVICVVESPA…SVTKIARGIP (100 aa)) constitute a Toprim domain.

Belongs to the RecR family.

In terms of biological role, may play a role in DNA repair. It seems to be involved in an RecBC-independent recombinational process of DNA repair. It may act with RecF and RecO. The chain is Recombination protein RecR from Chlorobium limicola (strain DSM 245 / NBRC 103803 / 6330).